The primary structure comprises 234 residues: uncharacterized protein (234 aa).

The disordered stretch occupies residues 62-99 (NEESISDLNSDNPGNSEPSDVESFVLSDEDENSEKDFS). Over residues 67 to 79 (SDLNSDNPGNSEP) the composition is skewed to polar residues.

This is an uncharacterized protein from Acanthamoeba polyphaga (Amoeba).